Consider the following 320-residue polypeptide: Annexin A5 (320 aa).

Ala-2 carries the N-acetylalanine modification. Annexin repeat units follow at residues 15 to 86 (FDER…ALMK), 87 to 158 (PSRL…VLLQ), 170 to 242 (AQVE…AVVK), and 246 to 317 (SIPA…LLCG). Lys-29 is covalently cross-linked (Glycyl lysine isopeptide (Lys-Gly) (interchain with G-Cter in SUMO1); alternate). Lys-29 participates in a covalent cross-link: Glycyl lysine isopeptide (Lys-Gly) (interchain with G-Cter in SUMO2); alternate. Ser-37 carries the post-translational modification Phosphoserine. 5 positions are modified to N6-acetyllysine: Lys-70, Lys-76, Lys-79, Lys-97, and Lys-101. Lys-290 is modified (N6-succinyllysine). The [IL]-x-C-x-x-[DE] motif motif lies at 314–319 (LLCGED).

Belongs to the annexin family. In terms of assembly, monomer. Binds ATRX and EIF5B. Interacts with hepatitis B virus (HBV). In terms of processing, S-nitrosylation is induced by interferon-gamma and oxidatively-modified low-densitity lipoprotein (LDL(ox)) possibly implicating the iNOS-S100A8/9 transnitrosylase complex.

Its function is as follows. This protein is an anticoagulant protein that acts as an indirect inhibitor of the thromboplastin-specific complex, which is involved in the blood coagulation cascade. This chain is Annexin A5 (ANXA5), found in Homo sapiens (Human).